Here is a 250-residue protein sequence, read N- to C-terminus: Enoyl-[acyl-carrier-protein] reductase [NADPH] FabL (250 aa).

Residues Ser-13 to Val-16, Ala-36 to Ser-38, Asn-62 to Val-63, and Asn-89 each bind NADP(+). Residues Tyr-151 and Lys-158 each act as proton acceptor in the active site. NADP(+)-binding positions include Lys-158 and Ile-187–Thr-189.

It belongs to the short-chain dehydrogenases/reductases (SDR) family. As to quaternary structure, homotetramer.

The catalysed reaction is a 2,3-saturated acyl-[ACP] + NADP(+) = a (2E)-enoyl-[ACP] + NADPH + H(+). The enzyme catalyses (2E)-butenoyl-[ACP] + NADPH + H(+) = butanoyl-[ACP] + NADP(+). Its pathway is lipid metabolism; fatty acid biosynthesis. Inhibited by triclosan. Catalyzes the reduction of a carbon-carbon double bond in an enoyl moiety that is covalently linked to an acyl carrier protein (ACP). It confers resistance to triclosan. The sequence is that of Enoyl-[acyl-carrier-protein] reductase [NADPH] FabL (fabL) from Bacillus subtilis (strain 168).